Reading from the N-terminus, the 190-residue chain is MNILKDKINKEGIVIDNRILRVDMFLNHQLDIELLNEIGKEFKNRFKDKEINKILTVETSGIGIACVVAQYFNNVPVVFAKKHAGSNMGENVYESKVYSFTKDIEYTIKVSKDYIDKEDNILIIDDFLASGSAMSGLIDIAEKSGAIVEGVGIVIEKEFQKGRKIILNKGIQLESLAIIKGFEDNKVVFK.

Residues Leu-20 and Asn-27 each contribute to the xanthine site. Position 129–133 (129–133 (ASGSA)) interacts with 5-phospho-alpha-D-ribose 1-diphosphate. Position 157 (Lys-157) interacts with xanthine.

The protein belongs to the purine/pyrimidine phosphoribosyltransferase family. Xpt subfamily. In terms of assembly, homodimer.

It localises to the cytoplasm. The enzyme catalyses XMP + diphosphate = xanthine + 5-phospho-alpha-D-ribose 1-diphosphate. It participates in purine metabolism; XMP biosynthesis via salvage pathway; XMP from xanthine: step 1/1. Its function is as follows. Converts the preformed base xanthine, a product of nucleic acid breakdown, to xanthosine 5'-monophosphate (XMP), so it can be reused for RNA or DNA synthesis. The protein is Xanthine phosphoribosyltransferase of Clostridium tetani (strain Massachusetts / E88).